A 597-amino-acid polypeptide reads, in one-letter code: Centrosomal protein of 70 kDa (597 aa).

The interval 1–24 (MFPVAPKPQDSNQPSDRLMTEKQQ) is disordered. 2 coiled-coil regions span residues 66 to 179 (MRQN…QTEV) and 254 to 320 (TYKG…QELI). The stretch at 483–516 (NGVYPRMNEVYTRLGEMNNAVRNLQELLELDSSS) is one TPR repeat.

Directly interacts with tubulin-gamma; this interaction determines centrosomal localization.

The protein localises to the cytoplasm. The protein resides in the cytoskeleton. It localises to the microtubule organizing center. It is found in the centrosome. In terms of biological role, plays a role in the organization of both preexisting and nascent microtubules in interphase cells. During mitosis, required for the organization and orientation of the mitotic spindle. This chain is Centrosomal protein of 70 kDa (CEP70), found in Macaca fascicularis (Crab-eating macaque).